The chain runs to 417 residues: Probable histone-binding protein lin-53 (417 aa).

WD repeat units lie at residues 118 to 158 (NHEG…AVPR), 170 to 210 (GHTK…NVAG), 220 to 260 (GHES…PGHC), 263 to 303 (AHSA…MKLH), 307 to 347 (SHRD…EDQS), and 364 to 404 (GHTA…YNEV).

It belongs to the WD repeat RBAP46/RBAP48/MSI1 family. Binds directly to helix 1 of the histone fold of histone H4, a region that is not accessible when H4 is in chromatin. Probable component of a NuRD-like complex, composed of at least lin-53 and hda-1. Interacts with lin-35. Interacts with hda-1; the interaction is direct. Component of the DRM complex, at least composed of lin-9, lin-35, lin-37, lin-52, lin-53, lin-54- dpl-1 and efl-1. Interacts with hcp-3.

It localises to the nucleus. The protein resides in the chromosome. Its subcellular location is the centromere. Its function is as follows. Core histone-binding subunit that may target chromatin assembly factors, chromatin remodeling factors and histone deacetylases to their histone substrates in a manner that is regulated by nucleosomal DNA. Required for hcp-3 and his-1 stabilization, localization of hcp-3 to centromeres and for proper chromosome segregation. Synthetic multivulva class B (synMuvB) protein. SynMuvB proteins are required to repress the induction of vulval development by Ras signaling and probably act by forming the multiprotein DRM complex that represses transcription. The protein is Probable histone-binding protein lin-53 of Caenorhabditis elegans.